Here is a 441-residue protein sequence, read N- to C-terminus: Ribulose bisphosphate carboxylase large chain (441 aa).

Lys5 is subject to N6,N6,N6-trimethyllysine. Thr164 is a substrate binding site. Catalysis depends on Lys166, which acts as the Proton acceptor. A substrate-binding site is contributed by Lys168. Residues Lys192, Asp194, and Glu195 each contribute to the Mg(2+) site. N6-carboxylysine is present on Lys192. The active-site Proton acceptor is the His285. Arg286, His318, and Ser370 together coordinate substrate.

It belongs to the RuBisCO large chain family. Type I subfamily. Heterohexadecamer of 8 large chains and 8 small chains; disulfide-linked. The disulfide link is formed within the large subunit homodimers. The cofactor is Mg(2+). Post-translationally, the disulfide bond which can form in the large chain dimeric partners within the hexadecamer appears to be associated with oxidative stress and protein turnover.

It localises to the plastid. The protein localises to the chloroplast. It catalyses the reaction 2 (2R)-3-phosphoglycerate + 2 H(+) = D-ribulose 1,5-bisphosphate + CO2 + H2O. The catalysed reaction is D-ribulose 1,5-bisphosphate + O2 = 2-phosphoglycolate + (2R)-3-phosphoglycerate + 2 H(+). Its function is as follows. RuBisCO catalyzes two reactions: the carboxylation of D-ribulose 1,5-bisphosphate, the primary event in carbon dioxide fixation, as well as the oxidative fragmentation of the pentose substrate in the photorespiration process. Both reactions occur simultaneously and in competition at the same active site. This is Ribulose bisphosphate carboxylase large chain from Hemionitis engywookii (Fendler's false cloak fern).